The following is a 101-amino-acid chain: NAD(P)H-quinone oxidoreductase subunit 4L, chloroplastic (101 aa).

3 helical membrane passes run 2–22 (MLEYVLFLSAYLFSIGIYGLI), 32–52 (MCLELILNAVNINLVTFSDLF), and 61–81 (IFSIFVIAIAAAEAAIGPAIV).

The protein belongs to the complex I subunit 4L family. In terms of assembly, NDH is composed of at least 16 different subunits, 5 of which are encoded in the nucleus.

The protein localises to the plastid. It localises to the chloroplast thylakoid membrane. It catalyses the reaction a plastoquinone + NADH + (n+1) H(+)(in) = a plastoquinol + NAD(+) + n H(+)(out). The enzyme catalyses a plastoquinone + NADPH + (n+1) H(+)(in) = a plastoquinol + NADP(+) + n H(+)(out). Its function is as follows. NDH shuttles electrons from NAD(P)H:plastoquinone, via FMN and iron-sulfur (Fe-S) centers, to quinones in the photosynthetic chain and possibly in a chloroplast respiratory chain. The immediate electron acceptor for the enzyme in this species is believed to be plastoquinone. Couples the redox reaction to proton translocation, and thus conserves the redox energy in a proton gradient. The protein is NAD(P)H-quinone oxidoreductase subunit 4L, chloroplastic of Acorus calamus var. americanus (American sweet flag).